We begin with the raw amino-acid sequence, 110 residues long: Integration host factor subunit alpha (110 aa).

This sequence belongs to the bacterial histone-like protein family. Heterodimer of an alpha and a beta chain.

Functionally, this protein is one of the two subunits of integration host factor, a specific DNA-binding protein that functions in genetic recombination as well as in transcriptional and translational control. This is Integration host factor subunit alpha from Nitrobacter hamburgensis (strain DSM 10229 / NCIMB 13809 / X14).